A 414-amino-acid polypeptide reads, in one-letter code: Probable isoprenylcysteine alpha-carbonyl methylesterase ICME (414 aa).

Residues 1–54 (MQPASPVSGDAGPVAEAVPPRGAPQVLVRRRSVPFSPDSPLAPGSRGGGERRST) form a disordered region. 2 helical membrane passes run 90 to 110 (LAALIIYAILLMPGFIRVGYY) and 145 to 165 (VVAFVTGGAWIIGYKAWGALL). Substrate-binding positions include 151–153 (GGA) and 222–224 (QSA). Residues serine 223, aspartate 323, and histidine 355 contribute to the active site.

Belongs to the AB hydrolase superfamily. Isoprenylcysteine methylesterase family.

It localises to the endoplasmic reticulum membrane. The protein resides in the golgi apparatus membrane. The enzyme catalyses [protein]-C-terminal S-[(2E,6E)-farnesyl]-L-cysteine methyl ester + H2O = [protein]-C-terminal S-[(2E,6E)-farnesyl]-L-cysteine + methanol + H(+). In terms of biological role, catalyzes the demethylation of isoprenylcysteine methylesters. This chain is Probable isoprenylcysteine alpha-carbonyl methylesterase ICME (IMCE), found in Oryza sativa subsp. japonica (Rice).